Reading from the N-terminus, the 169-residue chain is Major fimbrial subunit SMF-1 (169 aa).

The signal sequence occupies residues 1 to 11 (MLAAAPLAANA).

It belongs to the fimbrial protein family.

The protein resides in the fimbrium. Functionally, involved in adherence to eukaryotic epithelial cells and abiotic surfaces. Mediates agglutination of animal red blood cells. This Stenotrophomonas maltophilia (strain K279a) protein is Major fimbrial subunit SMF-1.